Reading from the N-terminus, the 276-residue chain is Small ribosomal subunit protein uS3 (276 aa).

The 72-residue stretch at 39-110 (IRRETMKFLK…KINIKIKEIK (72 aa)) folds into the KH type-2 domain.

The protein belongs to the universal ribosomal protein uS3 family. As to quaternary structure, part of the 30S ribosomal subunit. Forms a tight complex with proteins S10 and S14.

Functionally, binds the lower part of the 30S subunit head. Binds mRNA in the 70S ribosome, positioning it for translation. The protein is Small ribosomal subunit protein uS3 of Borrelia recurrentis (strain A1).